The following is a 164-amino-acid chain: R-phycoerythrin alpha chain (164 aa).

(2R,3E)-phycoerythrobilin-binding residues include N47, K81, C82, R84, H88, R137, C139, and R142.

This sequence belongs to the phycobiliprotein family. As to quaternary structure, heterododecamer of 6 alpha and 6 beta chains. The basic functional unit of phycobiliproteins is a ring-shaped hexamer formed from two back-to-back trimers contacting via the alpha chain subunits. The trimers are composed of alpha/beta subunit heterodimers arranged around a three-fold axis of symmetry. The phycoerythrins also contain a gamma subunit which is located in the center of the hexamer. Post-translationally, contains two covalently linked phycoerythrobilin chromophores.

Its subcellular location is the plastid. The protein localises to the chloroplast thylakoid membrane. Its function is as follows. Light-harvesting photosynthetic tetrapyrrole chromophore-protein from the phycobiliprotein complex. This is R-phycoerythrin alpha chain (cpeA) from Griffithsia monilis (Red alga).